Here is a 299-residue protein sequence, read N- to C-terminus: Neomycin C epimerase (299 aa).

Residues 10 to 222 enclose the Radical SAM core domain; it reads PVRQVRAYRN…WNHIFETGRR (213 aa). 5 residues coordinate [4Fe-4S] cluster: Cys26, Cys30, Cys33, Cys226, and Cys247. Residue Cys249 is the Proton donor of the active site. [4Fe-4S] cluster is bound by residues Cys271 and Cys274.

It belongs to the radical SAM superfamily. It depends on [4Fe-4S] cluster as a cofactor.

It catalyses the reaction neomycin C + AH2 + S-adenosyl-L-methionine = neomycin B + 5'-deoxyadenosine + L-methionine + A + H(+). Its pathway is antibiotic biosynthesis; neomycin biosynthesis. Its function is as follows. Catalyzes the last step of neomycin B biosynthesis, i.e. the irreversible epimerization at C-5''' of neomycin C to give neomycin B. To a lesser extent, is also able to convert neomycin Y2 to neomycin Y1. The sequence is that of Neomycin C epimerase from Streptomyces fradiae (Streptomyces roseoflavus).